The sequence spans 937 residues: AP-2 complex subunit beta (937 aa).

The residue at position 2 (Thr2) is an N-acetylthreonine. Residue Ser4 is modified to Phosphoserine. Lys265 is subject to N6-acetyllysine. Residues Tyr737 and Tyr928 each carry the phosphotyrosine modification.

It belongs to the adaptor complexes large subunit family. In terms of assembly, adapter protein complex 2 (AP-2) is a heterotetramer composed of two large adaptins (alpha-type subunit AP2A1 or AP2A2 and beta-type subunit AP2B1), a medium adaptin (mu-type subunit AP2M1) and a small adaptin (sigma-type subunit AP2S1). Interacts with EPN1. Interacts with EPS15; clathrin competes with EPS15. Interacts with SNAP91; clathrin competes with SNAP91. Interacts with CLTC; clathrin competes with EPS15, SNAP91 and PIP5K1C. Interacts with LDLRAP1. Interacts with AMPH and BIN1. Interacts with ARF6 (GDP-bound). Interacts (dephosphorylated at Tyr-737) with ARRB1; phosphorylation of AP2B1 at Tyr-737 disrupts the interaction. Interacts with SLC2A8. Interacts with SCYL1 and SCYL2. Interacts with TGFBR1 and TGFBR2. Interacts with PIP5K1C; clathrin competes with PIP5K1C. Interacts with DENND1B. Interacts with FCHO1. Interacts with RFTN1. Interacts with KIAA1107. Together with AP2A1 or AP2A2 and AP2M1, it interacts with ADAM10; this interaction facilitates ADAM10 endocytosis from the plasma membrane during long-term potentiation in hippocampal neurons. The N-terminus is blocked. Post-translationally, phosphorylation at Tyr-737 by SRC occurs at the plasma membrane in clathrin-coated vesicles (CCVs).

It localises to the cell membrane. The protein localises to the membrane. The protein resides in the coated pit. Its function is as follows. Component of the adaptor protein complex 2 (AP-2). Adaptor protein complexes function in protein transport via transport vesicles in different membrane traffic pathways. Adaptor protein complexes are vesicle coat components and appear to be involved in cargo selection and vesicle formation. AP-2 is involved in clathrin-dependent endocytosis in which cargo proteins are incorporated into vesicles surrounded by clathrin (clathrin-coated vesicles, CCVs) which are destined for fusion with the early endosome. The clathrin lattice serves as a mechanical scaffold but is itself unable to bind directly to membrane components. Clathrin-associated adaptor protein (AP) complexes which can bind directly to both the clathrin lattice and to the lipid and protein components of membranes are considered to be the major clathrin adaptors contributing the CCV formation. AP-2 also serves as a cargo receptor to selectively sort the membrane proteins involved in receptor-mediated endocytosis. AP-2 seems to play a role in the recycling of synaptic vesicle membranes from the presynaptic surface. AP-2 recognizes Y-X-X-[FILMV] (Y-X-X-Phi) and [ED]-X-X-X-L-[LI] endocytosis signal motifs within the cytosolic tails of transmembrane cargo molecules. AP-2 may also play a role in maintaining normal post-endocytic trafficking through the ARF6-regulated, non-clathrin pathway. During long-term potentiation in hippocampal neurons, AP-2 is responsible for the endocytosis of ADAM10. The AP-2 beta subunit acts via its C-terminal appendage domain as a scaffolding platform for endocytic accessory proteins; at least some clathrin-associated sorting proteins (CLASPs) are recognized by their [DE]-X(1,2)-F-X-X-[FL]-X-X-X-R motif. The AP-2 beta subunit binds to clathrin heavy chain, promoting clathrin lattice assembly; clathrin displaces at least some CLASPs from AP2B1 which probably then can be positioned for further coat assembly. In Bos taurus (Bovine), this protein is AP-2 complex subunit beta (AP2B1).